An 849-amino-acid polypeptide reads, in one-letter code: Lysine-specific histone demethylase 1 homolog 1 (849 aa).

Residues 1–118 form a disordered region; the sequence is MEEGSEAQPP…RRRRKKQFPG (118 aa). 2 stretches are compositionally biased toward low complexity: residues 34–67 and 89–103; these read GQAA…AADA and PTSS…VDDS. The span at 106–115 shows a compositional bias: basic residues; it reads ARKRRRRKKQ. The region spanning 159-260 is the SWIRM domain; it reads ARELDAEALI…FGLAPSVISL (102 aa). 4 residues coordinate FAD: glutamate 300, arginine 302, arginine 308, and glutamate 688.

This sequence belongs to the flavin monoamine oxidase family. FAD is required as a cofactor.

Functionally, probable histone demethylase. The chain is Lysine-specific histone demethylase 1 homolog 1 from Oryza sativa subsp. japonica (Rice).